We begin with the raw amino-acid sequence, 601 residues long: Elongation factor 4 (601 aa).

One can recognise a tr-type G domain in the interval 7-189; the sequence is KNIRNFSIVA…AIVTRLPPPM (183 aa). GTP-binding positions include 19 to 24 and 136 to 139; these read DHGKST and NKVD.

It belongs to the TRAFAC class translation factor GTPase superfamily. Classic translation factor GTPase family. LepA subfamily.

The protein localises to the cell inner membrane. It carries out the reaction GTP + H2O = GDP + phosphate + H(+). Functionally, required for accurate and efficient protein synthesis under certain stress conditions. May act as a fidelity factor of the translation reaction, by catalyzing a one-codon backward translocation of tRNAs on improperly translocated ribosomes. Back-translocation proceeds from a post-translocation (POST) complex to a pre-translocation (PRE) complex, thus giving elongation factor G a second chance to translocate the tRNAs correctly. Binds to ribosomes in a GTP-dependent manner. The protein is Elongation factor 4 of Xanthobacter autotrophicus (strain ATCC BAA-1158 / Py2).